The following is a 256-amino-acid chain: MKHIARKRFGQHFLSDAAVVDAIVGLIDPRPGQALVEIGPGLGAMTDPLVARCEHLTVVELDRDLAARLRRRAELQVIESDVLRVDFAALAMASAGRLRIVGNLPYNISTPILFHLLPAAAQVEDQHFMLQKEVVERMAAAPCSKDYGRLSVMLQWRYDIESVLDVPPEAFEPPPRVNSAVVRMLPFPAPPAVDAALLGELVATAFSQRRKLLRHTLGKWLDAREFSGTFDTQRRAEEVPVADYLALALALTPGER.

Residues His-12, Leu-14, Gly-39, Glu-60, Asp-81, and Asn-103 each coordinate S-adenosyl-L-methionine.

The protein belongs to the class I-like SAM-binding methyltransferase superfamily. rRNA adenine N(6)-methyltransferase family. RsmA subfamily.

It is found in the cytoplasm. It catalyses the reaction adenosine(1518)/adenosine(1519) in 16S rRNA + 4 S-adenosyl-L-methionine = N(6)-dimethyladenosine(1518)/N(6)-dimethyladenosine(1519) in 16S rRNA + 4 S-adenosyl-L-homocysteine + 4 H(+). Functionally, specifically dimethylates two adjacent adenosines (A1518 and A1519) in the loop of a conserved hairpin near the 3'-end of 16S rRNA in the 30S particle. May play a critical role in biogenesis of 30S subunits. This chain is Ribosomal RNA small subunit methyltransferase A, found in Methylibium petroleiphilum (strain ATCC BAA-1232 / LMG 22953 / PM1).